We begin with the raw amino-acid sequence, 527 residues long: Ribonuclease Y (527 aa).

Residues 21–41 (ILAIFFSFIIGIVFGGMALFV) form a helical membrane-spanning segment. The tract at residues 78–97 (READKTRNSAETELKERRSE) is disordered. Positions 217 to 302 (TTNVVPLPSD…EVVTKAKEEV (86 aa)) constitute a KH domain. An HD domain is found at 343–436 (VLQHSIEVAQ…VSAADAISSA (94 aa)).

It belongs to the RNase Y family.

The protein resides in the cell membrane. In terms of biological role, endoribonuclease that initiates mRNA decay. The protein is Ribonuclease Y of Dehalococcoides mccartyi (strain ATCC BAA-2100 / JCM 16839 / KCTC 5957 / BAV1).